Reading from the N-terminus, the 989-residue chain is Phosphoenolpyruvate carboxylase (989 aa).

Catalysis depends on residues His175 and Lys630.

It belongs to the PEPCase type 1 family. It depends on Mg(2+) as a cofactor.

The enzyme catalyses oxaloacetate + phosphate = phosphoenolpyruvate + hydrogencarbonate. In terms of biological role, forms oxaloacetate, a four-carbon dicarboxylic acid source for the tricarboxylic acid cycle. This Prochlorococcus marinus (strain AS9601) protein is Phosphoenolpyruvate carboxylase.